The chain runs to 505 residues: Lysine--tRNA ligase (505 aa).

Positions 415 and 422 each coordinate Mg(2+).

It belongs to the class-II aminoacyl-tRNA synthetase family. Homodimer. Requires Mg(2+) as cofactor.

It localises to the cytoplasm. The enzyme catalyses tRNA(Lys) + L-lysine + ATP = L-lysyl-tRNA(Lys) + AMP + diphosphate. The polypeptide is Lysine--tRNA ligase (Xanthomonas oryzae pv. oryzae (strain MAFF 311018)).